The primary structure comprises 32 residues: Cytochrome b6-f complex subunit 7 (32 aa).

A helical transmembrane segment spans residues 9–27 (AVVFWVLIPVGLAGGALLL).

The protein belongs to the PetM family. The 4 large subunits of the cytochrome b6-f complex are cytochrome b6, subunit IV (17 kDa polypeptide, PetD), cytochrome f and the Rieske protein, while the 4 small subunits are PetG, PetL, PetM and PetN. The complex functions as a dimer.

Its subcellular location is the cellular thylakoid membrane. Its function is as follows. Component of the cytochrome b6-f complex, which mediates electron transfer between photosystem II (PSII) and photosystem I (PSI), cyclic electron flow around PSI, and state transitions. The chain is Cytochrome b6-f complex subunit 7 from Synechococcus sp. (strain CC9311).